A 572-amino-acid chain; its full sequence is Formate--tetrahydrofolate ligase (572 aa).

Residue 65–72 (TPLGEGKT) coordinates ATP.

The protein belongs to the formate--tetrahydrofolate ligase family.

It carries out the reaction (6S)-5,6,7,8-tetrahydrofolate + formate + ATP = (6R)-10-formyltetrahydrofolate + ADP + phosphate. Its pathway is one-carbon metabolism; tetrahydrofolate interconversion. This Chloroflexus aggregans (strain MD-66 / DSM 9485) protein is Formate--tetrahydrofolate ligase.